Here is a 188-residue protein sequence, read N- to C-terminus: Peptidyl-tRNA hydrolase (188 aa).

Phe-14 contributes to the tRNA binding site. The active-site Proton acceptor is His-19. TRNA is bound by residues Tyr-64, Asn-66, and Asn-112.

It belongs to the PTH family. In terms of assembly, monomer.

It localises to the cytoplasm. The catalysed reaction is an N-acyl-L-alpha-aminoacyl-tRNA + H2O = an N-acyl-L-amino acid + a tRNA + H(+). In terms of biological role, hydrolyzes ribosome-free peptidyl-tRNAs (with 1 or more amino acids incorporated), which drop off the ribosome during protein synthesis, or as a result of ribosome stalling. Catalyzes the release of premature peptidyl moieties from peptidyl-tRNA molecules trapped in stalled 50S ribosomal subunits, and thus maintains levels of free tRNAs and 50S ribosomes. The sequence is that of Peptidyl-tRNA hydrolase from Aster yellows witches'-broom phytoplasma (strain AYWB).